A 231-amino-acid polypeptide reads, in one-letter code: Large ribosomal subunit protein uL1 (231 aa).

Belongs to the universal ribosomal protein uL1 family. Part of the 50S ribosomal subunit.

Functionally, binds directly to 23S rRNA. The L1 stalk is quite mobile in the ribosome, and is involved in E site tRNA release. Protein L1 is also a translational repressor protein, it controls the translation of the L11 operon by binding to its mRNA. The chain is Large ribosomal subunit protein uL1 from Neisseria meningitidis serogroup C (strain 053442).